The following is a 251-amino-acid chain: Triosephosphate isomerase (251 aa).

Substrate is bound at residue 12 to 14; it reads NWK. The active-site Electrophile is His98. Glu168 (proton acceptor) is an active-site residue. Residues Gly174, Ser213, and 234 to 235 contribute to the substrate site; that span reads GG.

It belongs to the triosephosphate isomerase family. In terms of assembly, homodimer.

Its subcellular location is the cytoplasm. The catalysed reaction is D-glyceraldehyde 3-phosphate = dihydroxyacetone phosphate. It functions in the pathway carbohydrate biosynthesis; gluconeogenesis. The protein operates within carbohydrate degradation; glycolysis; D-glyceraldehyde 3-phosphate from glycerone phosphate: step 1/1. In terms of biological role, involved in the gluconeogenesis. Catalyzes stereospecifically the conversion of dihydroxyacetone phosphate (DHAP) to D-glyceraldehyde-3-phosphate (G3P). The polypeptide is Triosephosphate isomerase (Bradyrhizobium diazoefficiens (strain JCM 10833 / BCRC 13528 / IAM 13628 / NBRC 14792 / USDA 110)).